A 518-amino-acid chain; its full sequence is ATP synthase F(1) complex catalytic subunit beta, mitochondrial (518 aa).

Positions 199, 200, 201, 202, 203, and 204 each coordinate ADP. ATP is bound at residue Gly199. Phosphate-binding residues include Gly199, Val200, Gly201, Lys202, and Thr203. ATP is bound by residues Gly201, Lys202, Thr203, and Val204. Thr203 is a binding site for Mg(2+). Glu228 contacts Mg(2+). ATP is bound at residue Arg229.

This sequence belongs to the ATPase alpha/beta chains family. Homotrimer. Component of the ATP synthase complex composed at least of ATP5F1A/subunit alpha, ATP5F1B/subunit beta, ATP5MC1/subunit c (homooctomer), MT-ATP6/subunit a, MT-ATP8/subunit 8, ATP5ME/subunit e, ATP5MF/subunit f, ATP5MG/subunit g, ATP5MK/subunit k, ATP5MJ/subunit j, ATP5F1C/subunit gamma, ATP5F1D/subunit delta, ATP5F1E/subunit epsilon, ATP5PF/subunit F6, ATP5PB/subunit b, ATP5PD/subunit d, ATP5PO/subunit OSCP. ATP synthase complex consists of a soluble F(1) head domain (subunits alpha(3) and beta(3)) - the catalytic core - and a membrane F(0) domain - the membrane proton channel (subunits c, a, 8, e, f, g, k and j). These two domains are linked by a central stalk (subunits gamma, delta, and epsilon) rotating inside the F1 region and a stationary peripheral stalk (subunits F6, b, d, and OSCP).

It localises to the mitochondrion inner membrane. It carries out the reaction ATP + H2O + 4 H(+)(in) = ADP + phosphate + 5 H(+)(out). In terms of biological role, catalytic subunit beta, of the mitochondrial membrane ATP synthase complex (F(1)F(0) ATP synthase or Complex V) that produces ATP from ADP in the presence of a proton gradient across the membrane which is generated by electron transport complexes of the respiratory chain. ATP synthase complex consist of a soluble F(1) head domain - the catalytic core - and a membrane F(1) domain - the membrane proton channel. These two domains are linked by a central stalk rotating inside the F(1) region and a stationary peripheral stalk. During catalysis, ATP synthesis in the catalytic domain of F(1) is coupled via a rotary mechanism of the central stalk subunits to proton translocation. In vivo, can only synthesize ATP although its ATP hydrolase activity can be activated artificially in vitro. With the subunit alpha (ATP5F1A), forms the catalytic core in the F(1) domain. This chain is ATP synthase F(1) complex catalytic subunit beta, mitochondrial, found in Cyprinus carpio (Common carp).